The chain runs to 350 residues: DNA primase small subunit PriS (350 aa).

Residues D97, D99, and D251 contribute to the active site.

The protein belongs to the eukaryotic-type primase small subunit family. Heterodimer of a small subunit (PriS) and a large subunit (PriL). Mg(2+) serves as cofactor. It depends on Mn(2+) as a cofactor. The cofactor is Zn(2+).

Catalytic subunit of DNA primase, an RNA polymerase that catalyzes the synthesis of short RNA molecules used as primers for DNA polymerase during DNA replication. The small subunit contains the primase catalytic core and has DNA synthesis activity on its own. Binding to the large subunit stabilizes and modulates the activity, increasing the rate of DNA synthesis while decreasing the length of the DNA fragments, and conferring RNA synthesis capability. The DNA polymerase activity may enable DNA primase to also catalyze primer extension after primer synthesis. May also play a role in DNA repair. The sequence is that of DNA primase small subunit PriS from Methanocaldococcus jannaschii (strain ATCC 43067 / DSM 2661 / JAL-1 / JCM 10045 / NBRC 100440) (Methanococcus jannaschii).